A 272-amino-acid chain; its full sequence is Shikimate dehydrogenase (NADP(+)) (272 aa).

Shikimate is bound by residues 14–16 (SKS) and threonine 61. Lysine 65 (proton acceptor) is an active-site residue. Glutamate 77 contributes to the NADP(+) binding site. Positions 86 and 102 each coordinate shikimate. NADP(+) contacts are provided by residues 126 to 130 (GAGGA), 149 to 154 (NRTVSR), and methionine 213. Shikimate is bound at residue tyrosine 215. Residue glycine 237 participates in NADP(+) binding.

Belongs to the shikimate dehydrogenase family. As to quaternary structure, homodimer.

It catalyses the reaction shikimate + NADP(+) = 3-dehydroshikimate + NADPH + H(+). It functions in the pathway metabolic intermediate biosynthesis; chorismate biosynthesis; chorismate from D-erythrose 4-phosphate and phosphoenolpyruvate: step 4/7. Functionally, involved in the biosynthesis of the chorismate, which leads to the biosynthesis of aromatic amino acids. Catalyzes the reversible NADPH linked reduction of 3-dehydroshikimate (DHSA) to yield shikimate (SA). This is Shikimate dehydrogenase (NADP(+)) from Shigella flexneri.